The chain runs to 155 residues: MGVQKTEAEVTSSVSAEKLFKALCLDIDTLLPQVLPGAIKSSETLEGDGGVGTVKLVHLGDASPFKTMKQKVDAIDKESFTYAYSIIDGDILLGFIESINNHFAYVPNADGGCTVKSTITFNTKGDAVVPEENIKFANDQNRAIFQAVEAYLIAN.

Belongs to the BetVI family. Monomer. In terms of tissue distribution, expressed in roots (at protein level). Expressed in roots.

The protein is Dau c 1 isoallergen Dau c 1.0401 of Daucus carota subsp. sativus (Carrot).